The sequence spans 318 residues: Electron transfer flavoprotein subunit alpha (318 aa).

257 to 285 is an FAD binding site; it reads LYIALGISGAIQHRAGMQTSKTIVAVNKD.

The protein belongs to the ETF alpha-subunit/FixB family. Heterodimer of an alpha and a beta subunit. FAD serves as cofactor.

Functionally, the electron transfer flavoprotein serves as a specific electron acceptor for other dehydrogenases. It transfers the electrons to the main respiratory chain via ETF-ubiquinone oxidoreductase (ETF dehydrogenase). The protein is Electron transfer flavoprotein subunit alpha (etfA) of Mycobacterium leprae (strain TN).